The primary structure comprises 155 residues: Cytochrome c-type biogenesis protein CcmE (155 aa).

Topologically, residues 1 to 7 (MTRKQKR) are cytoplasmic. A helical; Signal-anchor for type II membrane protein transmembrane segment spans residues 8-28 (LVVIAGGMSFILAAVLLVMFA). Residues 29–155 (FSQSVAYFYM…GKGQEAKATP (127 aa)) lie on the Periplasmic side of the membrane. 2 residues coordinate heme: His-124 and Tyr-128.

The protein belongs to the CcmE/CycJ family.

It localises to the cell inner membrane. Functionally, heme chaperone required for the biogenesis of c-type cytochromes. Transiently binds heme delivered by CcmC and transfers the heme to apo-cytochromes in a process facilitated by CcmF and CcmH. In Rhizobium etli (strain ATCC 51251 / DSM 11541 / JCM 21823 / NBRC 15573 / CFN 42), this protein is Cytochrome c-type biogenesis protein CcmE.